We begin with the raw amino-acid sequence, 573 residues long: Chaperone Ric-8 (573 aa).

The span at glutamate 308–glutamate 324 shows a compositional bias: basic and acidic residues. Disordered stretches follow at residues glutamate 308–alanine 329 and glycine 473–glutamine 493. Residues serine 477, serine 478, serine 480, and serine 483 each carry the phosphoserine modification.

It belongs to the synembryn family. As to quaternary structure, interacts with GDP-bound G(i)-alpha protein G-i-alpha-65A. Does not interact with G-alpha proteins when they are in complex with subunits beta and gamma. Interacts with Frq2 in a Ca(2+)-independent manner but does not interact with Frq1. In terms of tissue distribution, expression in the embryo is primarily neural.

The protein resides in the cytoplasm. The protein localises to the cell cortex. Its subcellular location is the presynapse. Functionally, chaperone that specifically binds and folds some, but not all, nascent G alpha proteins prior to G protein heterotrimer formation, promoting their stability and activity. Also acts as a guanine nucleotide exchange factor (GEF) for G alpha proteins by stimulating exchange of bound GDP for free GTP. Plays a key role in asymmetric spindle positioning, a step for asymmetric cell division that generates cell diversity during development by activating G(i) alpha protein independently of G-protein coupled receptors. Required during gastrulation and sensory organ precursor (SOP) formation. Plays a role in positively regulating synapse number and neurotransmitter release. This Drosophila melanogaster (Fruit fly) protein is Chaperone Ric-8 (ric8a).